Consider the following 396-residue polypeptide: Cell division protein FtsZ 1 (396 aa).

Residues 1 to 38 (MDSIVQDAIDEAEESEDSASEPADVAGGGGDTVPTGTM) form a disordered region. Residues 8–19 (AIDEAEESEDSA) are compositionally biased toward acidic residues. Residues 61–65 (GAGSN), 148–150 (GTG), Glu179, Arg183, and Asp226 contribute to the GTP site. Residues 358–396 (QIYGRNEAAEGDGPAQESTPEPEPEPQAGSEIEDIDYVE) form a disordered region.

This sequence belongs to the FtsZ family. Homodimer. Polymerizes to form a dynamic ring structure in a strictly GTP-dependent manner. Interacts directly with several other division proteins.

The protein resides in the cytoplasm. Functionally, essential cell division protein that forms a contractile ring structure (Z ring) at the future cell division site. The regulation of the ring assembly controls the timing and the location of cell division. One of the functions of the FtsZ ring is to recruit other cell division proteins to the septum to produce a new cell wall between the dividing cells. Binds GTP and shows GTPase activity. The polypeptide is Cell division protein FtsZ 1 (Halobacterium salinarum (strain ATCC 29341 / DSM 671 / R1)).